The primary structure comprises 367 residues: Protein valois (367 aa).

3 WD repeats span residues 101–139 (QAEH…RDSQ), 152–192 (AHPT…MVST), and 198–238 (SHTD…PSST). An interaction with csul region spans residues 309 to 367 (LAAMSNLPASVKVANVQAGHEFIYTHQDTHSRLTDAVWTDDSTLITIGHGRKMVTHAIK).

As to quaternary structure, interacts with csul and tud. In oocytes, localizes to pole plasm and nuage (at protein level). Expressed stronger in the germline than in somatic cells. In the germarium it sometimes concentrates in perinuclear aggregates that disappear by stage 2 of oogenesis. At later stages, it is uniformly distributed in the nurse cells and oocyte, as well as in young embryos, with no particular enrichment at the posterior or inside the pole cells (at protein level).

It is found in the cytoplasm. Functionally, involved in specific localization of cytoplasmic proteins during the formation of pole plasm. Required for synthesis and/or stability of oskar protein (osk) and localization of tudor (tud) in both the nuage and posterior pole of the oocyte. Required for normal posterior localization of osk in later stages of oogenesis and for posterior localization of the vasa (vas) protein during the entire process of pole plasm assembly. May act by regulating the complex that contains the arginine N-methyltransferase csul. The chain is Protein valois (vls) from Drosophila melanogaster (Fruit fly).